A 388-amino-acid chain; its full sequence is F-box protein ETP2 (388 aa).

An F-box domain is found at 2-48; sequence KTIQEQLPNDLVEEILCRVPATSLRRLRSTCKAWNRLFKGDRILASK.

As to quaternary structure, interacts with EIN2 (via C-terminus).

In terms of biological role, negative regulator of EIN2 protein stability. This chain is F-box protein ETP2, found in Arabidopsis thaliana (Mouse-ear cress).